The primary structure comprises 742 residues: Clamp-binding protein CrfC (742 aa).

Residues 41–45 (QLALP) form a clamp-binding consensus region. The Dynamin-type G domain occupies 66-402 (SRLEMVLAIV…LWEDSLFAQP (337 aa)). The G1 motif stretch occupies residues 76-83 (GTMKAGKS). Residues 102-104 (MTA) form a G2 motif region. Positions 236–239 (DTPG) are G3 motif. Residues 297-300 (NKFD) are G4 motif. The tract at residues 331–334 (FPVS) is G5 motif. Residues 440–472 (RAHGLNVACEQLRQNIHQIEESLQLLQLNQAQV) adopt a coiled-coil conformation.

It belongs to the TRAFAC class dynamin-like GTPase superfamily. Dynamin/Fzo/YdjA family. Forms homooligomers. Binds to the beta sliding clamp processivity factor (DnaN) in the presence and absence of DNA, may bind to the clamp itself as homodimers or trimers. Homooligomers may be able to bind more than 1 clamp complex.

It localises to the cytoplasm. Important for the colocalization of sister nascent DNA strands after replication fork passage during DNA replication, and for positioning and subsequent partitioning of sister chromosomes. Does not have GTPase activity on its own. In Escherichia coli (strain K12), this protein is Clamp-binding protein CrfC (crfC).